The primary structure comprises 238 residues: MEKRDELYAGKAKSVYTTDDEDMLIMLFRDDTSAFDGKKKEALARKGAVNNQFNAAIMEKLKAAGIPCHFEKTLSATESLVKKLDMIPVECVVRNIAAGSICRRLGVEEGLELTPPTFEFFLKDDDLGDPMVNDFHIRSFGWASDDQVAQMKTLTFAVNDVLKQLFLDGGMLLVDYKLEFGMFKGEVLLGDEFSPDGCRLWDKDSREKLDKDRFRQGLGGVVEAYEEVGKRLGMTFEY.

Belongs to the SAICAR synthetase family.

The enzyme catalyses 5-amino-1-(5-phospho-D-ribosyl)imidazole-4-carboxylate + L-aspartate + ATP = (2S)-2-[5-amino-1-(5-phospho-beta-D-ribosyl)imidazole-4-carboxamido]succinate + ADP + phosphate + 2 H(+). Its pathway is purine metabolism; IMP biosynthesis via de novo pathway; 5-amino-1-(5-phospho-D-ribosyl)imidazole-4-carboxamide from 5-amino-1-(5-phospho-D-ribosyl)imidazole-4-carboxylate: step 1/2. The chain is Phosphoribosylaminoimidazole-succinocarboxamide synthase from Alcanivorax borkumensis (strain ATCC 700651 / DSM 11573 / NCIMB 13689 / SK2).